Here is a 384-residue protein sequence, read N- to C-terminus: 4-hydroxy-3-methylbut-2-en-1-yl diphosphate synthase (flavodoxin) 1 (384 aa).

[4Fe-4S] cluster is bound by residues Cys281, Cys284, Cys316, and Glu323.

The protein belongs to the IspG family. It depends on [4Fe-4S] cluster as a cofactor.

The enzyme catalyses (2E)-4-hydroxy-3-methylbut-2-enyl diphosphate + oxidized [flavodoxin] + H2O + 2 H(+) = 2-C-methyl-D-erythritol 2,4-cyclic diphosphate + reduced [flavodoxin]. Its pathway is isoprenoid biosynthesis; isopentenyl diphosphate biosynthesis via DXP pathway; isopentenyl diphosphate from 1-deoxy-D-xylulose 5-phosphate: step 5/6. Functionally, converts 2C-methyl-D-erythritol 2,4-cyclodiphosphate (ME-2,4cPP) into 1-hydroxy-2-methyl-2-(E)-butenyl 4-diphosphate. This is 4-hydroxy-3-methylbut-2-en-1-yl diphosphate synthase (flavodoxin) 1 from Streptomyces coelicolor (strain ATCC BAA-471 / A3(2) / M145).